Here is a 636-residue protein sequence, read N- to C-terminus: Envelope glycoprotein (636 aa).

Residues 1-32 (MEGPAFSKPLKDKINPWGPLIILGILIRAGVS) form the signal peptide. The tract at residues 32-233 (SVQHDSPHQV…QVLNIGPRLP (202 aa)) is receptor-binding domain (RBD). At 33–581 (VQHDSPHQVF…FNRSPWFTTL (549 aa)) the chain is on the extracellular side. Asn43 and Asn58 each carry an N-linked (GlcNAc...) asparagine; by host glycan. Intrachain disulfides connect Cys109-Cys126 and Cys118-Cys131. Residues 254 to 282 (LPRPPQPPPPGAASIVPETAPPSQQPGTG) are disordered. Residues 255–264 (PRPPQPPPPG) are compositionally biased toward pro residues. Asn297 is a glycosylation site (N-linked (GlcNAc...) asparagine; by host). Intrachain disulfides connect Cys307–Cys310, Cys307–Cys534, Cys337–Cys391, Cys356–Cys368, Cys398–Cys411, and Cys526–Cys533. The CXXC signature appears at 307-310 (CWLC). Asn329 and Asn336 each carry an N-linked (GlcNAc...) asparagine; by host glycan. Asn369 and Asn405 each carry an N-linked (GlcNAc...) asparagine; by host glycan. Residues 443–463 (VSLTLALLLGGLTMGGIAAGV) are fusion peptide. A coiled-coil region spans residues 472–508 (ATQQFQQLQAAVHNDLKEVEKSITNLEKSLTSLSEVA). The tract at residues 509 to 525 (LQNRRGLDLLFLKEGGL) is immunosuppression. A CX6CC motif is present at residues 526 to 534 (CAALKEECC). The chain crosses the membrane as a helical span at residues 582 to 602 (ISTIMGPLIVLLLILLFGPCI). The S-palmitoyl cysteine; by host moiety is linked to residue Cys601. Over 603-636 (LNRLVQFVKDRISVVQALVLTQQYHQLKPIEYEP) the chain is Cytoplasmic. The short motif at 626-629 (YHQL) is the YXXL motif; contains endocytosis signal element.

The mature envelope protein (Env) consists of a trimer of SU-TM heterodimers attached by a labile interchain disulfide bond. Post-translationally, specific enzymatic cleavages in vivo yield mature proteins. Envelope glycoproteins are synthesized as an inactive precursor that is N-glycosylated and processed likely by host cell furin or by a furin-like protease in the Golgi to yield the mature SU and TM proteins. The cleavage site between SU and TM requires the minimal sequence [KR]-X-[KR]-R. The R-peptide is released from the C-terminus of the cytoplasmic tail of the TM protein upon particle formation as a result of proteolytic cleavage by the viral protease. Cleavage of this peptide is required for TM to become fusogenic. The CXXC motif is highly conserved across a broad range of retroviral envelope proteins. It is thought to participate in the formation of a labile disulfide bond possibly with the CX6CC motif present in the transmembrane protein. Isomerization of the intersubunit disulfide bond to an SU intrachain disulfide bond is thought to occur upon receptor recognition in order to allow membrane fusion. In terms of processing, the transmembrane protein is palmitoylated. Post-translationally, the R-peptide is palmitoylated.

It localises to the virion membrane. The protein localises to the host cell membrane. Its function is as follows. The surface protein (SU) attaches the virus to the host cell by binding to its receptor. This interaction triggers the refolding of the transmembrane protein (TM) and is thought to activate its fusogenic potential by unmasking its fusion peptide. Fusion occurs at the host cell plasma membrane. Functionally, the transmembrane protein (TM) acts as a class I viral fusion protein. Under the current model, the protein has at least 3 conformational states: pre-fusion native state, pre-hairpin intermediate state, and post-fusion hairpin state. During viral and target cell membrane fusion, the coiled coil regions (heptad repeats) assume a trimer-of-hairpins structure, positioning the fusion peptide in close proximity to the C-terminal region of the ectodomain. The formation of this structure appears to drive apposition and subsequent fusion of viral and target cell membranes. Membranes fusion leads to delivery of the nucleocapsid into the cytoplasm. In Mus musculus (Mouse), this protein is Envelope glycoprotein (env).